The primary structure comprises 608 residues: RAS guanyl-releasing protein 2 (608 aa).

The N-terminal Ras-GEF domain maps to 4-126 (TLDLDKGCTV…SLIDIESVPT (123 aa)). Serine 116, serine 117, and serine 147 each carry phosphoserine. The region spanning 154–387 (EPMELAEHLT…YQLSLQREPR (234 aa)) is the Ras-GEF domain. The disordered stretch occupies residues 382–405 (LQREPRSKSSPTSPTSCTPPPRPP). EF-hand domains lie at 426–461 (HIEK…FPYL) and 463–490 (AFGD…SSSV). Residues aspartate 439, aspartate 441, aspartate 443, histidine 445, glutamate 450, aspartate 468, asparagine 470, aspartate 472, cysteine 474, and glutamate 479 each coordinate Ca(2+). The Phorbol-ester/DAG-type zinc finger occupies 498-548 (VHNFQESNSLRPVACRHCKALILGIYKQGLKCRACGVNCHKQCKERLSVEC). Phosphoserine is present on residues serine 554 and serine 575. The interval 555–596 (VSLEGSAPSPSPTHTHHRAFSFSLPRPGRRSSRPPEIREEEV) is disordered.

The protein belongs to the RASGRP family. Forms a signaling complex with RAP1 and BRAF. Interacts with F-actin. Interacts with RAP1. Detected in megakaryocytes, platelet and neutrophils but not in lymphocytes (at protein level). Isoform 1 and isoform 3 are detected in brain basal glanglia, heart, lung, spleen, liver and kidney interstitial cells.

The protein localises to the cytoplasm. It is found in the cytosol. It localises to the cell membrane. The protein resides in the synapse. Its subcellular location is the synaptosome. The protein localises to the cell projection. It is found in the ruffle membrane. Its function is as follows. Functions as a calcium- and DAG-regulated nucleotide exchange factor specifically activating Rap through the exchange of bound GDP for GTP. May also activate other GTPases such as RRAS, RRAS2, NRAS, KRAS but not HRAS. Functions in aggregation of platelets and adhesion of T-lymphocytes and neutrophils probably through inside-out integrin activation. May function in the muscarinic acetylcholine receptor M1/CHRM1 signaling pathway. The polypeptide is RAS guanyl-releasing protein 2 (Rasgrp2) (Mus musculus (Mouse)).